Here is a 288-residue protein sequence, read N- to C-terminus: Protoheme IX farnesyltransferase (288 aa).

A run of 9 helical transmembrane segments spans residues 8–28 (ATKP…FLLA), 35–55 (YLIF…GCVL), 80–100 (ISIL…IYLL), 107–127 (LTML…TKCM), 132–152 (IYST…GYCA), 162–182 (LLLL…IAIL), 208–228 (IVIY…SGYT), 229–249 (TSYQ…YLAL), and 266–286 (FIFS…DSIF).

The protein belongs to the UbiA prenyltransferase family. Protoheme IX farnesyltransferase subfamily.

It is found in the cell membrane. It carries out the reaction heme b + (2E,6E)-farnesyl diphosphate + H2O = Fe(II)-heme o + diphosphate. Its pathway is porphyrin-containing compound metabolism; heme O biosynthesis; heme O from protoheme: step 1/1. In terms of biological role, converts heme B (protoheme IX) to heme O by substitution of the vinyl group on carbon 2 of heme B porphyrin ring with a hydroxyethyl farnesyl side group. This chain is Protoheme IX farnesyltransferase, found in Baumannia cicadellinicola subsp. Homalodisca coagulata.